Reading from the N-terminus, the 430-residue chain is Adenylosuccinate synthetase (430 aa).

GTP is bound by residues 17–23 and 45–47; these read GDEGKGK and GHT. Asp18 (proton acceptor) is an active-site residue. Mg(2+)-binding residues include Asp18 and Gly45. IMP is bound by residues 18–21, 43–46, Thr139, Arg153, Asn229, Thr244, and Arg308; these read DEGK and NAGH. Catalysis depends on His46, which acts as the Proton donor. Residue 304-310 participates in substrate binding; it reads TVTGRRR. Residues Arg310, 336–338, and 418–420 contribute to the GTP site; these read KLD and GVG.

This sequence belongs to the adenylosuccinate synthetase family. In terms of assembly, homodimer. The cofactor is Mg(2+).

The protein resides in the cytoplasm. The catalysed reaction is IMP + L-aspartate + GTP = N(6)-(1,2-dicarboxyethyl)-AMP + GDP + phosphate + 2 H(+). Its pathway is purine metabolism; AMP biosynthesis via de novo pathway; AMP from IMP: step 1/2. Its function is as follows. Plays an important role in the de novo pathway and in the salvage pathway of purine nucleotide biosynthesis. Catalyzes the first committed step in the biosynthesis of AMP from IMP. The sequence is that of Adenylosuccinate synthetase from Cryptococcus neoformans var. neoformans serotype D (strain B-3501A) (Filobasidiella neoformans).